We begin with the raw amino-acid sequence, 493 residues long: Ecdysteroid UDP-glucosyltransferase (493 aa).

The N-terminal stretch at 1–17 (MIFILLTTLLAVGGAQT) is a signal peptide.

Belongs to the UDP-glycosyltransferase family.

Functionally, catalyzes the transfer of glucose from UDP-glucose to ecdysteroids which are insect molting hormones. Expression of egt interferes with normal insect development and block molting. This Choristoneura fumiferana defective polyhedrosis virus (Cfdef) protein is Ecdysteroid UDP-glucosyltransferase (egt).